The following is a 549-amino-acid chain: Cation/acetate symporter ActP (549 aa).

13 helical membrane-spanning segments follow: residues 33 to 53 (WQAI…TYWA), 77 to 97 (LAIA…ALVF), 103 to 123 (GLIY…LIAE), 148 to 168 (ILSA…QMVG), 183 to 203 (IAVV…GMLA), 206 to 226 (WVQI…AFMV), 262 to 282 (ISAL…PHIL), 303 to 323 (GFMG…IMLV), 355 to 375 (LFLG…VAGL), 404 to 424 (VSKI…VLFE), 428 to 448 (IAFM…PIIL), 464 to 484 (GGWL…TIWV), and 493 to 513 (IFPY…GIWL).

This sequence belongs to the sodium:solute symporter (SSF) (TC 2.A.21) family.

Its subcellular location is the cell inner membrane. Transports acetate. The sequence is that of Cation/acetate symporter ActP from Escherichia coli O1:K1 / APEC.